A 958-amino-acid chain; its full sequence is MHTCCPPVTLEQDLHRKMHSWMLQTLAFAVTSLVLSCAETIDYYGEICDNACPCEEKDGILTVSCENRGIISLSEISPPRFPIYHLLLSGNLLNRLYPNEFVNYTGASILHLGSNVIQDIETGAFHGLRGLRRLHLNNNKLELLRDDTFLGLENLEYLQVDYNYISVIEPNAFGKLHLLQVLILNDNLLSSLPNNLFRFVPLTHLDLRGNRLKLLPYVGLLQHMDKVVELQLEENPWNCSCELISLKDWLDSISYSALVGDVVCETPFRLHGRDLDEVSKQELCPRRLISDYEMRPQTPLSTTGYLHTTPASVNSVATSSSAVYKPPLKPPKGTRQPNKPRVRPTSRQPSKDLGYSNYGPSIAYQTKSPVPLECPTACSCNLQISDLGLNVNCQERKIESIAELQPKPYNPKKMYLTENYIAVVRRTDFLEATGLDLLHLGNNRISMIQDRAFGDLTNLRRLYLNGNRIERLSPELFYGLQSLQYLFLQYNLIREIQSGTFDPVPNLQLLFLNNNLLQAMPSGVFSGLTLLRLNLRSNHFTSLPVSGVLDQLKSLIQIDLHDNPWDCTCDIVGMKLWVEQLKVGVLVDEVICKAPKKFAETDMRSIKSELLCPDYSDVVVSTPTPSSIQVPARTSAVTPAVRLNSTGAPASLGAGGGASSVPLSVLILSLLLVFIMSVFVAAGLFVLVMKRRKKNQSDHTSTNNSDVSSFNMQYSVYGGGGGTGGHPHAHVHHRGPALPKVKTPAGHVYEYIPHPLGHMCKNPIYRSREGNSVEDYKDLHELKVTYSSNHHLQQQQQPPPPPQQPQQQPPPQLQLQPGEEERRESHHLRSPAYSVSTIEPREDLLSPVQDADRFYRGILEPDKHCSTTPAGNSLPEYPKFPCSPAAYTFSPNYDLRRPHQYLHPGAGDSRLREPVLYSPPSAVFVEPNRNEYLELKAKLNVEPDYLEVLEKQTTFSQF.

An N-terminal signal peptide occupies residues 1 to 40; that stretch reads MHTCCPPVTLEQDLHRKMHSWMLQTLAFAVTSLVLSCAET. The Extracellular portion of the chain corresponds to 41 to 664; it reads IDYYGEICDN…GGGASSVPLS (624 aa). LRR repeat units lie at residues 82-103, 106-127, 130-151, 154-175, 178-199, and 201-222; these read PIYHLLLSGNLLNRLYPNEFVN, GASILHLGSNVIQDIETGAFHG, GLRRLHLNNNKLELLRDDTFLG, NLEYLQVDYNYISVIEPNAFGK, LLQVLILNDNLLSSLPNNLFRF, and PLTHLDLRGNRLKLLPYVGLLQ. Asparagine 103 is a glycosylation site (N-linked (GlcNAc...) asparagine). Positions 235–286 constitute an LRRCT 1 domain; it reads NPWNCSCELISLKDWLDSISYSALVGDVVCETPFRLHGRDLDEVSKQELCPR. The interval 317-358 is disordered; the sequence is ATSSSAVYKPPLKPPKGTRQPNKPRVRPTSRQPSKDLGYSNY. An LRRNT domain is found at 365 to 407; the sequence is QTKSPVPLECPTACSCNLQISDLGLNVNCQERKIESIAELQPK. LRR repeat units follow at residues 410 to 431, 434 to 455, 458 to 479, 482 to 503, 506 to 527, and 529 to 550; these read NPKKMYLTENYIAVVRRTDFLE, GLDLLHLGNNRISMIQDRAFGD, NLRRLYLNGNRIERLSPELFYG, SLQYLFLQYNLIREIQSGTFDP, NLQLLFLNNNLLQAMPSGVFSG, and TLLRLNLRSNHFTSLPVSGVLD. The LRRCT 2 domain maps to 563–614; sequence NPWDCTCDIVGMKLWVEQLKVGVLVDEVICKAPKKFAETDMRSIKSELLCPD. Asparagine 644 carries an N-linked (GlcNAc...) asparagine glycan. A helical membrane pass occupies residues 665–685; sequence VLILSLLLVFIMSVFVAAGLF. Residues 686-958 lie on the Cytoplasmic side of the membrane; the sequence is VLVMKRRKKN…LEKQTTFSQF (273 aa). The tract at residues 789–844 is disordered; sequence NHHLQQQQQPPPPPQQPQQQPPPQLQLQPGEEERRESHHLRSPAYSVSTIEPREDL. Positions 797–812 are enriched in pro residues; that stretch reads QPPPPPQQPQQQPPPQ.

The protein belongs to the SLITRK family. As to expression, expressed predominantly in the cerebral cortex of the brain but also at low levels in the spinal cord and medulla.

It is found in the membrane. In terms of biological role, suppresses neurite outgrowth. This Homo sapiens (Human) protein is SLIT and NTRK-like protein 5 (SLITRK5).